A 245-amino-acid chain; its full sequence is 1-(5-phosphoribosyl)-5-[(5-phosphoribosylamino)methylideneamino] imidazole-4-carboxamide isomerase (245 aa).

Catalysis depends on Asp8, which acts as the Proton acceptor. Asp129 (proton donor) is an active-site residue.

This sequence belongs to the HisA/HisF family.

It localises to the cytoplasm. It catalyses the reaction 1-(5-phospho-beta-D-ribosyl)-5-[(5-phospho-beta-D-ribosylamino)methylideneamino]imidazole-4-carboxamide = 5-[(5-phospho-1-deoxy-D-ribulos-1-ylimino)methylamino]-1-(5-phospho-beta-D-ribosyl)imidazole-4-carboxamide. It participates in amino-acid biosynthesis; L-histidine biosynthesis; L-histidine from 5-phospho-alpha-D-ribose 1-diphosphate: step 4/9. The sequence is that of 1-(5-phosphoribosyl)-5-[(5-phosphoribosylamino)methylideneamino] imidazole-4-carboxamide isomerase from Rhodopseudomonas palustris (strain HaA2).